Reading from the N-terminus, the 158-residue chain is Transcription elongation factor GreA (158 aa).

The stretch at 53-75 forms a coiled coil; it reads AKERQGQVEATIGDLEDKLSRAQ.

This sequence belongs to the GreA/GreB family.

Necessary for efficient RNA polymerase transcription elongation past template-encoded arresting sites. The arresting sites in DNA have the property of trapping a certain fraction of elongating RNA polymerases that pass through, resulting in locked ternary complexes. Cleavage of the nascent transcript by cleavage factors such as GreA or GreB allows the resumption of elongation from the new 3'terminus. GreA releases sequences of 2 to 3 nucleotides. This Sphingopyxis alaskensis (strain DSM 13593 / LMG 18877 / RB2256) (Sphingomonas alaskensis) protein is Transcription elongation factor GreA.